Consider the following 254-residue polypeptide: Thiazole synthase (254 aa).

Lysine 95 serves as the catalytic Schiff-base intermediate with DXP. 1-deoxy-D-xylulose 5-phosphate contacts are provided by residues glycine 156, 182–183 (AG), and 204–205 (NT).

This sequence belongs to the ThiG family. As to quaternary structure, homotetramer. Forms heterodimers with either ThiH or ThiS.

The protein localises to the cytoplasm. The enzyme catalyses [ThiS sulfur-carrier protein]-C-terminal-Gly-aminoethanethioate + 2-iminoacetate + 1-deoxy-D-xylulose 5-phosphate = [ThiS sulfur-carrier protein]-C-terminal Gly-Gly + 2-[(2R,5Z)-2-carboxy-4-methylthiazol-5(2H)-ylidene]ethyl phosphate + 2 H2O + H(+). The protein operates within cofactor biosynthesis; thiamine diphosphate biosynthesis. Functionally, catalyzes the rearrangement of 1-deoxy-D-xylulose 5-phosphate (DXP) to produce the thiazole phosphate moiety of thiamine. Sulfur is provided by the thiocarboxylate moiety of the carrier protein ThiS. In vitro, sulfur can be provided by H(2)S. The polypeptide is Thiazole synthase (Shewanella baltica (strain OS223)).